A 514-amino-acid polypeptide reads, in one-letter code: Cytidine and dCMP deaminase domain-containing protein 1 (514 aa).

Composition is skewed to polar residues over residues 1 to 11 and 18 to 27; these read MKEAGQMQNLE and SVSTQTGSMT. Disordered stretches follow at residues 1–27 and 55–83; these read MKEA…GSMT and RQKS…TDKR. Basic and acidic residues predominate over residues 59–83; it reads QKNEEGKHGPLGDNEERTRVSTDKR. Positions 70 to 168 constitute a CMP/dCMP-type deaminase 1 domain; the sequence is GDNEERTRVS…SLLTEASSSE (99 aa). Residues histidine 109, cysteine 134, and cysteine 137 each contribute to the Zn(2+) site. The Nuclear export signal motif lies at 271–283; sequence NLRQNMKDLILLL. The CMP/dCMP-type deaminase 2 domain occupies 317–482; it reads EIARHCMVQA…LNPSGAYGLE (166 aa). A Zn(2+)-binding site is contributed by histidine 398. The active-site Proton donor is the glutamate 400. Residues cysteine 426 and cysteine 429 each coordinate Zn(2+). The disordered stretch occupies residues 480-514; sequence GLEQNEPERRENGVLRPVPQKEEQHQDKKLRLGIH. Residues 485–514 show a composition bias toward basic and acidic residues; it reads EPERRENGVLRPVPQKEEQHQDKKLRLGIH. The Bipartite nuclear localization signal motif lies at 488 to 510; sequence RRENGVLRPVPQKEEQHQDKKLR.

The protein belongs to the cytidine and deoxycytidylate deaminase family. Zn(2+) is required as a cofactor. Widely expressed. Expressed at high levels in the testis.

It is found in the cytoplasm. Its subcellular location is the nucleus. It catalyses the reaction 2'-deoxycytidine + H2O + H(+) = 2'-deoxyuridine + NH4(+). The catalysed reaction is cytidine + H2O + H(+) = uridine + NH4(+). Its function is as follows. Catalyzes the deamination of cytidine and deoxycytidine into uridine and deoxyuridine, respectively. May play an important role in testicular development and spermatogenesis. This chain is Cytidine and dCMP deaminase domain-containing protein 1 (CDADC1), found in Homo sapiens (Human).